The following is a 134-amino-acid chain: Small ribosomal subunit protein uS11 (134 aa).

Belongs to the universal ribosomal protein uS11 family. Part of the 30S ribosomal subunit. Interacts with proteins S7 and S18. Binds to IF-3.

Functionally, located on the platform of the 30S subunit, it bridges several disparate RNA helices of the 16S rRNA. Forms part of the Shine-Dalgarno cleft in the 70S ribosome. The sequence is that of Small ribosomal subunit protein uS11 from Parafrankia sp. (strain EAN1pec).